The chain runs to 414 residues: MTIKTLALQCRDAAQVVSQLSSQAKCALLQAMAAALEADAGTILAANARDLEAARAKGTASAMLDRLALDDKRLAGIAAALREVALLPDPVGRITREDVRPNGIRVQKVRVPLGVIAMIYEARPNVTADAAALCIKAGNGVILRGGSEAIHSNTAIARALQRALREANVPEAALTLVEDLRRETMLELLQLNDIVDLAIPRGGEGLIRFVAEHARVPVIKHYKGVCHLFVDASAEMELALRLLIDGKATRPSACNSLETLLVHADIAERFLPLAAQALRERKVELRGDAATRAVLPEIAPASDDDYAAEFLDLILAMRVVADLDTALAHIRQYGSDHTEVIATQDPDNAERFVQSLRSAVVMVNASSRFSDGGELGLGAEIGISTTRLHSYGPMGLEALTVERFVVRGEGQVRH.

The protein belongs to the gamma-glutamyl phosphate reductase family.

It is found in the cytoplasm. The enzyme catalyses L-glutamate 5-semialdehyde + phosphate + NADP(+) = L-glutamyl 5-phosphate + NADPH + H(+). Its pathway is amino-acid biosynthesis; L-proline biosynthesis; L-glutamate 5-semialdehyde from L-glutamate: step 2/2. In terms of biological role, catalyzes the NADPH-dependent reduction of L-glutamate 5-phosphate into L-glutamate 5-semialdehyde and phosphate. The product spontaneously undergoes cyclization to form 1-pyrroline-5-carboxylate. This is Gamma-glutamyl phosphate reductase from Xanthomonas oryzae pv. oryzae (strain KACC10331 / KXO85).